The primary structure comprises 545 residues: MELKERNFKKIGLICVAVLLCGMVFSYGIFPSILRFMIKQNVLLKPGTQIRDMFEKIPFPLDFKLHIFNVTNPDEIMRGGKPRVNDIGPLYFEEWKEKYDTVDNVEEDTLTFTLRNTWIFRPDLSALTGEEIVTIPHPLIMGVLLMVQRDREAMMPLVKKGVNILFDPLESAFLKVRIMDLLFDGIYVDCSSQDFAAKALCSGMDSEGAVMPHNETHYKFSFFGMRNHTEAGRWVVYRGVKNIRDLGRVVSYNEETEMDIWDGDECNQYIGTDSTIFPPFLTAQDRLWAWSPEICRSLGAHYVHKSKYAGLPMSYFELDFGDLKNEPHNHCFCRDAPDDCPPKGTMDLSPCLGGPIIGSKPHFYGADPKLVEAVDGLAPNKAAHDVYIHFELASICWFTGSPVSAAKRLQFSMELGPIRDHELFGQLPDVILPMFWAEEGASLNKTWTNQLKYQLFLGLKFNATVKWLTIIIGTVGAVGSAYMYFRKETKTTDVAPVDVSTPDTNPSSAKDGVVNVSLGRNLPPVIDGLDKPPKLRATELQQERY.

Topologically, residues 1–10 (MELKERNFKK) are cytoplasmic. The helical transmembrane segment at 11–31 (IGLICVAVLLCGMVFSYGIFP) threads the bilayer. At 32-464 (SILRFMIKQN…LFLGLKFNAT (433 aa)) the chain is on the extracellular side. N-linked (GlcNAc...) asparagine glycans are attached at residues Asn-69, Asn-214, and Asn-227. Intrachain disulfides connect Cys-266-Cys-331, Cys-295-Cys-351, and Cys-333-Cys-340. N-linked (GlcNAc...) asparagine glycosylation is found at Asn-444 and Asn-462. The helical transmembrane segment at 465–485 (VKWLTIIIGTVGAVGSAYMYF) threads the bilayer. At 486 to 545 (RKETKTTDVAPVDVSTPDTNPSSAKDGVVNVSLGRNLPPVIDGLDKPPKLRATELQQERY) the chain is on the cytoplasmic side.

Belongs to the CD36 family. In terms of tissue distribution, selectively expressed in antenna.

The protein localises to the cell membrane. Its function is as follows. Plays an olfactory role that is not restricted to pheromone sensitivity. This is Sensory neuron membrane protein 1 (snmp1) from Anopheles gambiae (African malaria mosquito).